We begin with the raw amino-acid sequence, 861 residues long: Linoleate 9S-lipoxygenase 2 (861 aa).

Residues 29–160 (NALDFTDLAG…RYKSDRIFFV (132 aa)) form the PLAT domain. The Lipoxygenase domain maps to 163-861 (PYLPSKTPEL…GKGIPNSVSI (699 aa)). A disordered region spans residues 212–246 (EGKENVRTTLGGSAEYPYPRRGRTGRPPTRTDPKS). Positions 522, 527, 713, 717, and 861 each coordinate Fe cation.

Belongs to the lipoxygenase family. As to quaternary structure, monomer. Requires Fe cation as cofactor. As to expression, highly expressed in tubers and roots. Detected in flower buds and leaves.

It is found in the cytoplasm. The enzyme catalyses (9Z,12Z)-octadecadienoate + O2 = (9S)-hydroperoxy-(10E,12Z)-octadecadienoate. Its pathway is lipid metabolism; oxylipin biosynthesis. Its function is as follows. Plant lipoxygenases may be involved in a number of diverse aspects of plant physiology including growth and development, pest resistance, and senescence or responses to wounding. Catalyzes the hydroperoxidation of lipids containing a cis,cis-1,4-pentadiene structure. Linoleic acid is the preferred substrate, but is also active with linolenic and arachidonic acids. This chain is Linoleate 9S-lipoxygenase 2 (LOX1.2), found in Solanum tuberosum (Potato).